A 210-amino-acid polypeptide reads, in one-letter code: Orotate phosphoribosyltransferase (210 aa).

Residues Arg-94, Lys-98, His-100, and 120–128 (EDLISTGGS) each bind 5-phospho-alpha-D-ribose 1-diphosphate. Orotate is bound at residue Ser-124.

This sequence belongs to the purine/pyrimidine phosphoribosyltransferase family. PyrE subfamily. Homodimer. It depends on Mg(2+) as a cofactor.

It catalyses the reaction orotidine 5'-phosphate + diphosphate = orotate + 5-phospho-alpha-D-ribose 1-diphosphate. It functions in the pathway pyrimidine metabolism; UMP biosynthesis via de novo pathway; UMP from orotate: step 1/2. Functionally, catalyzes the transfer of a ribosyl phosphate group from 5-phosphoribose 1-diphosphate to orotate, leading to the formation of orotidine monophosphate (OMP). The chain is Orotate phosphoribosyltransferase from Bacillus mycoides (strain KBAB4) (Bacillus weihenstephanensis).